Consider the following 572-residue polypeptide: MSRLEIALSSTLDHLLKHIFLGTVFLTSLYALYRWLLPKPLPGIPFNQKSAQSIWGDVVELRDDPSGLAKWCSKQLENHGSPICQALMGPLSKPVVLVADVGNAREMLMGRSDFDRSAYIIDRFPLFGEFHLNMKTGDNWRQSRNWLKDLLAPQYLHNVAGPAIHSSVLKLIKLWEHKSCVGDSRAFNMVSDLKTLALDVIVAFHFGSDFQDSALDRQVDHVGKLDGSKLPCGEHNEVEFSKAPLHEFQQALTDVGDKMAAIYTTKWPPLIVAWWVRYVSPYYRPFFQAKDRFIRKHINLAVRRYRNDEEPSTGIDYMVYREEKAARKAYRQPMFDKQIMIDEAYGNLIAGQHTTSAALVWILKLLADYPSVQEKLREELQGIFVGAMQENRLPTAAEIITSKLPYLDAVLEETLRLRAAMLVPRDATKDTELLGRRIPKGTVVLLVCQGPDYKPSPPSKYWSDVKASRVYPGKGNPDLEVFDPERWLVRNEKGDLEFDGSSYPQLAFGLGIRSCWGRRLAMVEMRIMTTLMTLKFELKDVPEGLRGHEASYDISYRAKKGFLRLKSLGEVP.

C515 is a binding site for heme.

The protein belongs to the cytochrome P450 family. Heme is required as a cofactor.

Its pathway is secondary metabolite biosynthesis. In terms of biological role, cytochrome P450 monooxygenase; part of the gene cluster that mediates the biosynthesis of the 6-methyl-2-pyrone derivative xylariolide D. XilC hydroxylates the 5-alkyl-6-methyl-2-pyrone backbone called prexylariolide D, produced by the highly reducing polyketide synthase xilA, on its side chain to form xylariolide D. This is Cytochrome P450 monooxygenase xilC from Penicillium crustosum (Blue mold fungus).